Reading from the N-terminus, the 240-residue chain is Transcriptional regulatory protein ChvI (240 aa).

One can recognise a Response regulatory domain in the interval 3 to 116 (TIALVDDDRN…LLVERVKAIL (114 aa)). 3 residues coordinate Mg(2+): D8, D9, and D52. D52 is subject to 4-aspartylphosphate. The segment at residues 139–238 (SRSLERGQLV…LYGVGYRFRE (100 aa)) is a DNA-binding region (ompR/PhoB-type).

Mg(2+) is required as a cofactor. In terms of processing, phosphorylated by ChvG.

The protein resides in the cytoplasm. Its pathway is glycan metabolism; exopolysaccharide biosynthesis. Its function is as follows. Member of a two-component regulatory system ChvG(ExoS)/ChvI involved in regulating the production of succinoglycan. In Rhizobium meliloti (strain 1021) (Ensifer meliloti), this protein is Transcriptional regulatory protein ChvI (chvI).